Reading from the N-terminus, the 439-residue chain is Phosphoribosylamine--glycine ligase (439 aa).

An ATP-grasp domain is found at arginine 109–aspartate 317. Isoleucine 136–threonine 195 serves as a coordination point for ATP. Residues glutamine 275, glutamate 287, and asparagine 289 each contribute to the Mg(2+) site. Mn(2+)-binding residues include glutamine 275, glutamate 287, and asparagine 289.

The protein belongs to the GARS family. Requires Mg(2+) as cofactor. The cofactor is Mn(2+).

The enzyme catalyses 5-phospho-beta-D-ribosylamine + glycine + ATP = N(1)-(5-phospho-beta-D-ribosyl)glycinamide + ADP + phosphate + H(+). Its pathway is purine metabolism; IMP biosynthesis via de novo pathway; N(1)-(5-phospho-D-ribosyl)glycinamide from 5-phospho-alpha-D-ribose 1-diphosphate: step 2/2. The sequence is that of Phosphoribosylamine--glycine ligase from Pyrococcus furiosus (strain ATCC 43587 / DSM 3638 / JCM 8422 / Vc1).